A 344-amino-acid chain; its full sequence is uncharacterized protein (344 aa).

The tract at residues 304-344 (AVPAPTPRRPLDSVLQIRQTPEKGRNASDRNARETGWFSPP) is disordered. A compositionally biased stretch (basic and acidic residues) spans 323-336 (TPEKGRNASDRNAR).

This is an uncharacterized protein from Mycobacterium tuberculosis (strain CDC 1551 / Oshkosh).